Consider the following 399-residue polypeptide: uncharacterized protein (399 aa).

Residues 1–8 are Cytoplasmic-facing; sequence MHNLQVRR. Residues 9–35 traverse the membrane as a helical segment; sequence HYAALKGFYLFAFLGTGSIIPLLSMYL. The Extracellular portion of the chain corresponds to 36 to 42; sequence TKEQHLS. A helical transmembrane segment spans residues 43–71; the sequence is GSQVGLIMSLGPIVMIFFQPFWGMLSDYT. Topologically, residues 72–75 are cytoplasmic; the sequence is QKTK. Residues 76 to 101 traverse the membrane as a helical segment; sequence GLLAVCTSITGIIGLAYIAFDSFPLF. Residues 102–105 are Extracellular-facing; it reads ILIA. The helical transmembrane segment at 106 to 123 threads the bilayer; it reads ACFAAFQSTIIPLSDSIS. Topologically, residues 124–134 are cytoplasmic; that stretch reads LRYTQETNGNY. The helical transmembrane segment at 135–157 threads the bilayer; the sequence is GGIRLFGSLGFGVAVFAMGQVTN. Over 158 to 160 the chain is Extracellular; sequence QLY. A helical membrane pass occupies residues 161 to 180; it reads PIHVIFIFGCAFLCIAAILA. Residues 181–210 lie on the Cytoplasmic side of the membrane; that stretch reads SQVPGQQKTTKVNIRKGFRELISNKTFLIF. A helical transmembrane segment spans residues 211 to 230; it reads MIITFTTFAPNLANNTYFSL. Over 231-234 the chain is Extracellular; that stretch reads FLDK. Residues 235–259 form a helical membrane-spanning segment; sequence SGASLSAIGILFFIGVISEIPFMRF. Topologically, residues 260 to 269 are cytoplasmic; it reads AQTFIDKMGL. The helical transmembrane segment at 270–289 threads the bilayer; it reads LNVIMLSGGVSLFRWALYFT. The Extracellular segment spans residues 290–292; the sequence is APS. The chain crosses the membrane as a helical span at residues 293-315; it reads LWIIYATVFLQGVAIGLFIPAAL. The Cytoplasmic portion of the chain corresponds to 316 to 327; the sequence is QYVKKITPRHVE. The helical transmembrane segment at 328–355 threads the bilayer; the sequence is ATALTMYAAIGNGFGNWFCTFAGGYIFD. Residues 356–358 lie on the Extracellular side of the membrane; that stretch reads YVS. Residues 359-379 traverse the membrane as a helical segment; the sequence is IFAVYLLFGILSIAGFGLTLY. Over 380 to 399 the chain is Cytoplasmic; it reads LMKAEKNKHTLHQPAVTFKP.

It belongs to the major facilitator superfamily.

The protein localises to the cell membrane. This is an uncharacterized protein from Bacillus subtilis (strain 168).